A 298-amino-acid polypeptide reads, in one-letter code: Glutamyl-Q tRNA(Asp) synthetase (298 aa).

L-glutamate-binding positions include 9–13 (RFAPS) and glutamate 45. Residues 12–22 (PSPTGLLHAGS) carry the 'HIGH' region motif. Zn(2+)-binding residues include cysteine 101, cysteine 103, tyrosine 121, and cysteine 125. L-glutamate-binding residues include tyrosine 179 and arginine 197. The 'KMSKS' region motif lies at 235–239 (KLSKQ). Residue lysine 238 participates in ATP binding.

It belongs to the class-I aminoacyl-tRNA synthetase family. GluQ subfamily. It depends on Zn(2+) as a cofactor.

Functionally, catalyzes the tRNA-independent activation of glutamate in presence of ATP and the subsequent transfer of glutamate onto a tRNA(Asp). Glutamate is transferred on the 2-amino-5-(4,5-dihydroxy-2-cyclopenten-1-yl) moiety of the queuosine in the wobble position of the QUC anticodon. The polypeptide is Glutamyl-Q tRNA(Asp) synthetase (Chromobacterium violaceum (strain ATCC 12472 / DSM 30191 / JCM 1249 / CCUG 213 / NBRC 12614 / NCIMB 9131 / NCTC 9757 / MK)).